The chain runs to 363 residues: MTSVINVNLPTQSYEIAIAPASLDQIGQSLAGLKLGKKVLLVSNPTIFKHFGKVAVDSLEAAGFQVASYSLPAGERYKTLNSIQKLYDIALENRLERSSTMVALGGGVIGDMTGFAAATWLRGINVVQVPTTLLAMVDSAIGGKTGVNHPHGKNLIGAFHQPRFVLIDPQVLKTLPVREFRAGMAEVIKYGVIWDAELFNQLEQSKRLDQLRYIKPELVDAILTRSCQAKADVVGKDEKEGGLRAILNYGHTVGHAVESLTNYRLLKHGEAVGIGMVAAGQIAVNLELWQQADADRQNALIEKAGLPTKLPVGLDIEGIIEALQLDKKVKDGKVRFVLPTQIGVVTVTDEVTSDHIRQVLQQM.

Residues 107-111, 131-132, Lys-144, and Lys-153 contribute to the NAD(+) site; these read GVIGD and TT. Zn(2+)-binding residues include Glu-186, His-251, and His-268.

This sequence belongs to the sugar phosphate cyclases superfamily. Dehydroquinate synthase family. NAD(+) serves as cofactor. The cofactor is Co(2+). It depends on Zn(2+) as a cofactor.

It localises to the cytoplasm. The catalysed reaction is 7-phospho-2-dehydro-3-deoxy-D-arabino-heptonate = 3-dehydroquinate + phosphate. It functions in the pathway metabolic intermediate biosynthesis; chorismate biosynthesis; chorismate from D-erythrose 4-phosphate and phosphoenolpyruvate: step 2/7. Functionally, catalyzes the conversion of 3-deoxy-D-arabino-heptulosonate 7-phosphate (DAHP) to dehydroquinate (DHQ). The sequence is that of 3-dehydroquinate synthase from Nostoc sp. (strain PCC 7120 / SAG 25.82 / UTEX 2576).